The following is a 550-amino-acid chain: Kinase suppressor of Ras B (550 aa).

2 stretches are compositionally biased toward low complexity: residues 21–56 and 63–75; these read SFSS…SNPI and ATSS…STSS. A disordered region spans residues 21-87; it reads SFSSWRRSST…PPPASAPPRI (67 aa). The Phorbol-ester/DAG-type zinc-finger motif lies at 90 to 145; the sequence is YHKMVPSKSKFRQCDVCEHIFIFDFVRKQHLDDVYACNVCGIRVHKGCLDRVKNDC. The interval 172–196 is disordered; the sequence is TTASISKSLTTSPTCSTSTTMSPAG. Low complexity predominate over residues 177 to 193; it reads SKSLTTSPTCSTSTTMS. The region spanning 248-528 is the Protein kinase domain; that stretch reads VDVMTKIGDG…FQQIVKRITV (281 aa). The interval 530-550 is disordered; it reads MPRKESNKQKRRSTAHENPLF.

The protein belongs to the protein kinase superfamily. TKL Ser/Thr protein kinase family. In terms of assembly, interacts with ndk-1.

In terms of biological role, probable inactive protein kinase which positively regulates Ras-mediated signaling probably acting at the level of let-60/ras or/and lin-45/raf. In the germline, regulates meiotic progression during oogenesis and mpk-1 (isoform b) phosphorylation. Plays a role in meiotic recombination events. Functions redundantly with ksr-1 in the Ras-mediated regulation of larval survival, the development of excretory canal, in determining vulval precursor cell fate during vulval induction and in mpk-1 phosphorylation in somatic cells. The protein is Kinase suppressor of Ras B of Caenorhabditis elegans.